A 225-amino-acid polypeptide reads, in one-letter code: UPF0758 protein AZOSEA04420 (225 aa).

One can recognise an MPN domain in the interval 102 to 225 (VFESPLAVRN…PLSFAERGLL (124 aa)). The Zn(2+) site is built by His-173, His-175, and Asp-186. A JAMM motif motif is present at residues 173–186 (HNHPSGAAEPSPAD).

Belongs to the UPF0758 family.

The polypeptide is UPF0758 protein AZOSEA04420 (Aromatoleum aromaticum (strain DSM 19018 / LMG 30748 / EbN1) (Azoarcus sp. (strain EbN1))).